Here is a 466-residue protein sequence, read N- to C-terminus: Vimentin (466 aa).

Low complexity-rich tracts occupy residues 1-13 and 20-33; these read MSTR…SYRR and TSSR…YVTT. The interval 1 to 33 is disordered; sequence MSTRSVSSSSYRRMFGGSGTSSRPSSNRSYVTT. Serine 2 carries the N-acetylserine modification. The tract at residues 2 to 95 is head; it reads STRSVSSSSY…FSLADAINTE (94 aa). Serine 5 bears the Phosphoserine mark. Serine 7 carries the post-translational modification Phosphoserine; by PKA and PKC; alternate. A glycan (O-linked (GlcNAc) serine; alternate) is linked at serine 7. Serine 8 carries the phosphoserine modification. A phosphoserine; by PKC mark is found at serine 9 and serine 10. Threonine 20 is subject to Phosphothreonine. Phosphoserine is present on residues serine 25 and serine 26. Threonine 33 is a glycosylation site (O-linked (GlcNAc) threonine). O-linked (GlcNAc) serine; alternate glycosylation occurs at serine 34. Serine 34 is modified (phosphoserine; by PKC; alternate). Serine 39 is subject to Phosphoserine; by CaMK2, PKA, PKC and ROCK2. Serine 42 is subject to Phosphoserine; by PKC. The residue at position 47 (serine 47) is a Phosphoserine; by PKA. Phosphoserine is present on residues serine 49 and serine 51. Tyrosine 53 carries the post-translational modification Phosphotyrosine. Phosphoserine is present on residues serine 55 and serine 56. The residue at position 61 (tyrosine 61) is a Phosphotyrosine. Serine 66 carries the post-translational modification Phosphoserine; by PKA and PKC. Residue serine 72 is modified to Phosphoserine; by AURKB and ROCK2. A phosphoserine mark is found at serine 73, serine 83, and serine 87. A coil 1A region spans residues 96–131; the sequence is FKNTRTNEKVELQELNDRFANYIDKVRFLEQQNKIL. Residues 96 to 131 are a coiled coil; the sequence is FKNTRTNEKVELQELNDRFANYIDKVRFLEQQNKIL. Residues 103-411 enclose the IF rod domain; the sequence is EKVELQELND…KLLEGEESRI (309 aa). Lysine 104 is covalently cross-linked (Glycyl lysine isopeptide (Lys-Gly) (interchain with G-Cter in SUMO2)). Position 117 is a phosphotyrosine (tyrosine 117). Residues lysine 120, lysine 129, and lysine 139 each carry the N6-acetyllysine; alternate modification. An N6-succinyllysine; alternate mark is found at lysine 120 and lysine 129. Glycyl lysine isopeptide (Lys-Gly) (interchain with G-Cter in SUMO2); alternate cross-links involve residues lysine 120, lysine 129, and lysine 139. The interval 132-153 is linker 1; it reads LAELEQLKGQGKSRLGDLYEEE. The residue at position 144 (serine 144) is a Phosphoserine. A coiled-coil region spans residues 154 to 245; the sequence is MRELRRQVDQ…KLHDEEIQEL (92 aa). Residues 154–245 form a coil 1B region; that stretch reads MRELRRQVDQ…KLHDEEIQEL (92 aa). Lysine 168 carries the N6-acetyllysine modification. Lysine 188 is modified (N6-acetyllysine; alternate). Residue lysine 188 is modified to N6-succinyllysine; alternate. Serine 214 is modified (phosphoserine). Lysine 223 carries the post-translational modification N6-acetyllysine; alternate. Lysine 223 is covalently cross-linked (Glycyl lysine isopeptide (Lys-Gly) (interchain with G-Cter in SUMO2); alternate). Serine 226 carries the post-translational modification Phosphoserine. The residue at position 235 (lysine 235) is an N6-acetyllysine. The linker 12 stretch occupies residues 246–268; it reads QAQIQEQHVQIDVDVSKPDLTAA. Residue lysine 262 forms a Glycyl lysine isopeptide (Lys-Gly) (interchain with G-Cter in SUMO2) linkage. Positions 269–407 are coil 2; it reads LRDVRQQYES…ATYRKLLEGE (139 aa). The residue at position 294 (lysine 294) is an N6-acetyllysine; alternate. Lysine 294 bears the N6-succinyllysine; alternate mark. Residue lysine 294 forms a Glycyl lysine isopeptide (Lys-Gly) (interchain with G-Cter in SUMO2); alternate linkage. Serine 299 is subject to Phosphoserine. Residues 303–407 adopt a coiled-coil conformation; sequence NRNNDALRQA…ATYRKLLEGE (105 aa). Lysine 313 participates in a covalent cross-link: Glycyl lysine isopeptide (Lys-Gly) (interchain with G-Cter in SUMO2). Serine 325 is modified (phosphoserine). A [IL]-x-C-x-x-[DE] motif motif is present at residues 326–329; sequence LTCE. N6-acetyllysine; alternate is present on lysine 373. Lysine 373 is covalently cross-linked (Glycyl lysine isopeptide (Lys-Gly) (interchain with G-Cter in SUMO2); alternate). Residues 408–466 form a tail region; that stretch reads ESRISLPLPNFSSLNLRETNLESLPLVDTHSKRTLLIKTVETRDGQVINETSQHHDDLE. 4 positions are modified to phosphoserine: serine 409, serine 412, serine 419, and serine 420. Threonine 426 carries the post-translational modification Phosphothreonine. Serine 430 carries the post-translational modification Phosphoserine. The residue at position 436 (threonine 436) is a Phosphothreonine. Serine 438 bears the Phosphoserine mark. Residue lysine 439 forms a Glycyl lysine isopeptide (Lys-Gly) (interchain with G-Cter in SUMO2) linkage. N6-acetyllysine; alternate is present on lysine 445. At lysine 445 the chain carries N6-succinyllysine; alternate. Residue lysine 445 forms a Glycyl lysine isopeptide (Lys-Gly) (interchain with G-Cter in SUMO2); alternate linkage. Residue lysine 445 forms a Glycyl lysine isopeptide (Lys-Gly) (interchain with G-Cter in SUMO1); alternate linkage. Residues threonine 446 and threonine 458 each carry the phosphothreonine modification. Residue serine 459 is modified to Phosphoserine.

This sequence belongs to the intermediate filament family. In terms of assembly, homomer assembled from elementary dimers. Identified in complexes that contain VIM, EZR, AHNAK, BFSP1, BFSP2, ANK2, PLEC, PRX and spectrin. Interacts with BCAS3. Interacts with LGSN. Interacts with SYNM. Interacts (via rod region) with PLEC (via CH 1 domain). Interacts with STK33. Interacts with LARP6. Interacts with RAB8B. Interacts with TOR1A; the interaction associates TOR1A with the cytoskeleton. Interacts with TOR1AIP1. Interacts with TOR1AIP1. Interacts with DIAPH1. Interacts with EPPK1; interaction is dependent of higher-order structure of intermediate filament. Interacts with the non-receptor tyrosine kinase SRMS; the interaction leads to phosphorylation of VIM. Interacts with NOD2. Interacts (via head region) with CORO1C. Interacts with HDGF. Interacts with PRKCE (via phorbol-ester/DAG-type 2 domain). Interacts with BFSP2. Interacts with PPL. Interacts with PKP1 and PKP2. Interacts with SCRIB (via PDZ domains); the interaction protects SCRIB from proteasomal degradation and facilitates SCRIB localization to intermediate filaments, the interaction is reduced by cell contact inhibition. Post-translationally, one of the most prominent phosphoproteins in various cells of mesenchymal origin. Phosphorylation is enhanced during cell division, at which time vimentin filaments are significantly reorganized. Phosphorylation by PKN1 inhibits the formation of filaments. Filament disassembly during mitosis is promoted by phosphorylation at Ser-55 as well as by nestin. Phosphorylated at Ser-56 by CDK5 during neutrophil secretion in the cytoplasm. Phosphorylated by STK33. Phosphorylated on tyrosine residues by SRMS. S-nitrosylation is induced by interferon-gamma and oxidatively-modified low-densitity lipoprotein (LDL(ox)) possibly implicating the iNOS-S100A8/9 transnitrosylase complex.

It is found in the cytoplasm. Its subcellular location is the cytoskeleton. The protein resides in the nucleus matrix. The protein localises to the cell membrane. Its function is as follows. Vimentins are class-III intermediate filaments found in various non-epithelial cells, especially mesenchymal cells. Vimentin is attached to the nucleus, endoplasmic reticulum, and mitochondria, either laterally or terminally. Plays a role in cell directional movement, orientation, cell sheet organization and Golgi complex polarization at the cell migration front. Protects SCRIB from proteasomal degradation and facilitates its localization to intermediate filaments in a cell contact-mediated manner. In terms of biological role, involved with LARP6 in the stabilization of type I collagen mRNAs for CO1A1 and CO1A2. This is Vimentin from Rattus norvegicus (Rat).